A 253-amino-acid polypeptide reads, in one-letter code: CENP-A recruiting complex protein mis20 (253 aa).

Residues 113–136 are disordered; that stretch reads TGPTTSKNKHPSHSNTIRSPPYKV.

In terms of assembly, component of the CENP-A recruiting complex composed of at least mis16, mis19, mis19 and mis20.

Its subcellular location is the cytoplasm. The protein localises to the cytoskeleton. It is found in the microtubule organizing center. It localises to the spindle pole body. The protein resides in the chromosome. Its subcellular location is the centromere. Its function is as follows. Component of the CENP-A recruiting complex that ensures the integrity of mitotic spindles through maintenance of kinetochore factors mis6/CENP-I and cnp1/CENP-A. Seems dispensable for proper chromosome segregation. This chain is CENP-A recruiting complex protein mis20, found in Schizosaccharomyces pombe (strain 972 / ATCC 24843) (Fission yeast).